The chain runs to 273 residues: Large ribosomal subunit protein uL2cz/uL2cy (273 aa).

Disordered stretches follow at residues 1–20 and 224–254; these read MAIH…AVDS and NPVD…PALG.

This sequence belongs to the universal ribosomal protein uL2 family. As to quaternary structure, part of the 50S ribosomal subunit.

It is found in the plastid. The protein resides in the chloroplast. The polypeptide is Large ribosomal subunit protein uL2cz/uL2cy (rpl2-A) (Nuphar advena (Common spatterdock)).